The following is a 122-amino-acid chain: Putative iron-sulfur cluster insertion protein ErpA (122 aa).

Residues Cys50, Cys114, and Cys116 each coordinate iron-sulfur cluster.

The protein belongs to the HesB/IscA family. As to quaternary structure, homodimer. It depends on iron-sulfur cluster as a cofactor.

In terms of biological role, required for insertion of 4Fe-4S clusters. The sequence is that of Putative iron-sulfur cluster insertion protein ErpA from Cupriavidus metallidurans (strain ATCC 43123 / DSM 2839 / NBRC 102507 / CH34) (Ralstonia metallidurans).